The chain runs to 420 residues: UDP-N-acetylglucosamine 1-carboxyvinyltransferase (420 aa).

Residue 22 to 23 (KN) coordinates phosphoenolpyruvate. R93 is a binding site for UDP-N-acetyl-alpha-D-glucosamine. C117 acts as the Proton donor in catalysis. Residue C117 is modified to 2-(S-cysteinyl)pyruvic acid O-phosphothioketal. Residues D307 and I329 each contribute to the UDP-N-acetyl-alpha-D-glucosamine site.

The protein belongs to the EPSP synthase family. MurA subfamily.

The protein localises to the cytoplasm. It carries out the reaction phosphoenolpyruvate + UDP-N-acetyl-alpha-D-glucosamine = UDP-N-acetyl-3-O-(1-carboxyvinyl)-alpha-D-glucosamine + phosphate. It functions in the pathway cell wall biogenesis; peptidoglycan biosynthesis. Its function is as follows. Cell wall formation. Adds enolpyruvyl to UDP-N-acetylglucosamine. This is UDP-N-acetylglucosamine 1-carboxyvinyltransferase from Alcanivorax borkumensis (strain ATCC 700651 / DSM 11573 / NCIMB 13689 / SK2).